Reading from the N-terminus, the 318-residue chain is Taste receptor type 2 member 7 (318 aa).

Residues 1–9 are Extracellular-facing; sequence MTDKVQTTL. Residues 10–30 traverse the membrane as a helical segment; that stretch reads LFLAIGEFSVGILGNAFIGLV. Topologically, residues 31–55 are cytoplasmic; sequence NCMDWVKKRKIASIDLILTSLAISR. The chain crosses the membrane as a helical span at residues 56–76; sequence ICLLCVILLDCFMLVLYPDVY. The Extracellular portion of the chain corresponds to 77–94; the sequence is ATGKQMRIIDFFWTLTNH. Residues 95–115 form a helical membrane-spanning segment; sequence LSIWFATCLSIYYFFKIANFF. The Cytoplasmic segment spans residues 116–128; sequence HPLFLWMKWRIDR. A helical membrane pass occupies residues 129–149; the sequence is VISWILLGCMVLSVFINLPAT. Over 150–187 the chain is Extracellular; sequence ENLNADFRRCVKAKRKTNLTWSCRVTKAQHASTKLFLN. N167 is a glycosylation site (N-linked (GlcNAc...) asparagine). The helical transmembrane segment at 188–208 threads the bilayer; sequence LVTLLPFSVCLMSFFLLILSL. The Cytoplasmic segment spans residues 209–235; the sequence is WRHIRRMQLSATGCRDPSTEAHVRALK. Residues 236-256 form a helical membrane-spanning segment; that stretch reads AVISFLLLFIAYYLSFLIATS. Residues 257 to 266 lie on the Extracellular side of the membrane; the sequence is SYFIPETELA. Residues 267–287 traverse the membrane as a helical segment; it reads VIFGEFIALIYPSSHSFILIL. Topologically, residues 288 to 318 are cytoplasmic; the sequence is GNSKLRRASLKVLWTVMSILKGRKFQQHKQI.

This sequence belongs to the G-protein coupled receptor T2R family.

The protein localises to the membrane. Its function is as follows. Gustducin-coupled receptor implicated in the perception of bitter compounds in the oral cavity and the gastrointestinal tract. Signals through PLCB2 and the calcium-regulated cation channel TRPM5. This is Taste receptor type 2 member 7 (TAS2R7) from Macaca mulatta (Rhesus macaque).